Here is a 159-residue protein sequence, read N- to C-terminus: Endoribonuclease YbeY (159 aa).

Residues His123, His127, and His133 each coordinate Zn(2+).

Belongs to the endoribonuclease YbeY family. It depends on Zn(2+) as a cofactor.

It localises to the cytoplasm. Functionally, single strand-specific metallo-endoribonuclease involved in late-stage 70S ribosome quality control and in maturation of the 3' terminus of the 16S rRNA. This is Endoribonuclease YbeY from Bacillus pumilus (strain SAFR-032).